Here is a 341-residue protein sequence, read N- to C-terminus: Phosphate acyltransferase (341 aa).

It belongs to the PlsX family. As to quaternary structure, homodimer. Probably interacts with PlsY.

Its subcellular location is the cytoplasm. It catalyses the reaction a fatty acyl-[ACP] + phosphate = an acyl phosphate + holo-[ACP]. The protein operates within lipid metabolism; phospholipid metabolism. Its function is as follows. Catalyzes the reversible formation of acyl-phosphate (acyl-PO(4)) from acyl-[acyl-carrier-protein] (acyl-ACP). This enzyme utilizes acyl-ACP as fatty acyl donor, but not acyl-CoA. The sequence is that of Phosphate acyltransferase from Elusimicrobium minutum (strain Pei191).